The following is a 2271-amino-acid chain: Serine-rich adhesin for platelets (2271 aa).

Positions 1–89 are cleaved as a signal peptide; it reads MSKRQKAFHD…VNMLHDQQAF (89 aa). A serine-rich repeat region 1, SRR1 region spans residues 90–230; sequence AASDAPLTSE…KTSTTSTSTA (141 aa). Positions 100–111 are enriched in polar residues; that stretch reads LNTQSETVGNQN. Disordered stretches follow at residues 100-229, 751-791, and 806-2243; these read LNTQ…STST, NSMS…VVST, and SVSA…GLLG. The segment covering 112-128 has biased composition (low complexity); sequence STTIEASTSTADSTSVT. Residues 129–140 are compositionally biased toward polar residues; that stretch reads KNSSSVQTSNSD. The span at 150–229 shows a compositional bias: low complexity; the sequence is VTSTTNSTSN…NKTSTTSTST (80 aa). Residues 231-751 form a non-repeat region (NRR) region; the sequence is PVKLRTFSRL…TTFKYEVTRN (521 aa). Composition is skewed to low complexity over residues 752–791, 806–1392, and 1402–2214; these read SMSD…VVST, SVSA…LSLS, and SNSA…ATSE. A serine-rich repeat region 2, SRR2 region spans residues 752–2232; that stretch reads SMSDSVSTSG…AQSEKRLPDT (1481 aa). The LPXTG sorting signal signature appears at 2229–2233; sequence LPDTG. The residue at position 2232 (Thr-2232) is a Pentaglycyl murein peptidoglycan amidated threonine. The propeptide at 2233–2271 is removed by sortase; that stretch reads GDSIKQNGLLGGVMTLLVGLGLMKRKKKKDENDQDDSQA.

This sequence belongs to the serine-rich repeat protein (SRRP) family. Post-translationally, proteolytically cleaved by a metalloprotease. Glycosylated. It is probable that most of the Ser residues in SSR1 and SSR2 are O-GlcNAcylated. Sequential glycosylation by sugar transferases are able to generate complex sugar polymorphisms.

The protein localises to the secreted. Its subcellular location is the cell wall. Mediates binding to human platelets, possibly through a receptor-ligand interaction. Probably associated with virulence in endovascular infection. The protein is Serine-rich adhesin for platelets (sraP) of Staphylococcus aureus (strain USA300).